The following is a 553-amino-acid chain: Arginine--tRNA ligase (553 aa).

The 'HIGH' region motif lies at 130 to 140; that stretch reads ANPTGPIHLGG.

This sequence belongs to the class-I aminoacyl-tRNA synthetase family. As to quaternary structure, monomer.

The protein resides in the cytoplasm. It carries out the reaction tRNA(Arg) + L-arginine + ATP = L-arginyl-tRNA(Arg) + AMP + diphosphate. The protein is Arginine--tRNA ligase of Corynebacterium aurimucosum (strain ATCC 700975 / DSM 44827 / CIP 107346 / CN-1) (Corynebacterium nigricans).